We begin with the raw amino-acid sequence, 761 residues long: MAASVKAAHELQSRTRTDDVLISGGVEFSSLLLSKPVLEGLSASGFQRPSPIQLKAIPLGRCGLDLIVQAKSGTGKTCVFTTIALDSLILENATTQVLVLAPTREIAVQIHAVVMAIGSAMEGLECHVFIGGRPISQDKQHLKKCHIAIGSPGRIKQLIEMGALMVSSIRLFVLDEADKLLEDDSSSSFQEQINWIYSSLPANKQMLALSATYPESLAQQLSRYMREPTFVRLNPTDPGLLGLKQYYKIVPSHSLPHKVFEEKVQSLLELFSKIPFNQALVFSNLHTRAQHLADILSSKGLPAVCISGGLSQDQRLEAMWKLKQYQCRVLISTDLTSRGIDAEKVNLVINLDVPQDWETYMHRIGRAGRFGTLGVAVTYCCHGEEENKMMAIAQKCSLDLMHLPDPIPPGIMEEACDHDVIIETLSKPKIPDNFKPEKKKKAKSEQMKSKPSRESHISVVITESVTGDKSCSRAETKTKNHSPKPGRQKQMAPAANLQHDSTITQKQQNNTLPKIPPLSSFKSHTGKRMTFDDALVDYETFIREGPGRSVEIIHQYDGFYRSQDKVNGLHDAHDEDEASESYVLEESQSHQDLPPAQEVSELSSEQKTSSESSSESEMEVESESSSSVPSKSTLEALPDNKVSLVRNHSELAKSTLPSTRVPQQATRSKQKPCQPQSQDTAHHHNLPHKHRTASKSSRRPTGPKRRTRETDETEEEEAGQDYWSSYRAWAEYYNSYYHHSPYNWMTAFYMNSVYIKEMMKH.

Positions Val26–Leu54 match the Q motif motif. ATP-binding positions include Arg48, Gln53, Ala70–Thr77, and Gly73–Cys78. Positions Ile57–Val231 constitute a Helicase ATP-binding domain. The DEAD box motif lies at Asp175 to Asp178. A Helicase C-terminal domain is found at Ser266–Ala415. Disordered regions lie at residues Pro428 to Thr525 and His570 to Gln720. Residues Lys443 to His456 show a composition bias toward basic and acidic residues. Positions Gln498–Leu512 are enriched in polar residues. Composition is skewed to low complexity over residues Ser600–Ser613 and Glu623–Glu635. Residues Thr655–Asp679 show a composition bias toward polar residues. Residues His683–Thr707 are compositionally biased toward basic residues.

Belongs to the DEAD box helicase family. DDX20 subfamily. As to quaternary structure, part of the core SMN complex.

The protein localises to the cytoplasm. The protein resides in the nucleus. The enzyme catalyses ATP + H2O = ADP + phosphate + H(+). It catalyses the reaction a ribonucleoside 5'-triphosphate + H2O = a ribonucleoside 5'-diphosphate + phosphate + H(+). Functionally, the SMN complex catalyzes the assembly of small nuclear ribonucleoproteins (snRNPs), the building blocks of the spliceosome, and thereby plays an important role in the splicing of cellular pre-mRNAs. Most spliceosomal snRNPs contain a common set of Sm proteins SNRPB, SNRPD1, SNRPD2, SNRPD3, SNRPE, SNRPF and SNRPG that assemble in a heptameric protein ring on the Sm site of the small nuclear RNA to form the core snRNP (Sm core). In the cytosol, the Sm proteins SNRPD1, SNRPD2, SNRPE, SNRPF and SNRPG are trapped in an inactive 6S pICln-Sm complex by the chaperone CLNS1A that controls the assembly of the core snRNP. To assemble core snRNPs, the SMN complex accepts the trapped 5Sm proteins from CLNS1A forming an intermediate. Binding of snRNA inside 5Sm triggers eviction of the SMN complex, thereby allowing binding of SNRPD3 and SNRPB to complete assembly of the core snRNP. May also play a role in the metabolism of small nucleolar ribonucleoprotein (snoRNPs). This is Probable ATP-dependent RNA helicase DDX20 (ddx20) from Danio rerio (Zebrafish).